Reading from the N-terminus, the 187-residue chain is V-type ATP synthase subunit E (187 aa).

This sequence belongs to the V-ATPase E subunit family.

Functionally, produces ATP from ADP in the presence of a proton gradient across the membrane. The polypeptide is V-type ATP synthase subunit E (Geotalea uraniireducens (strain Rf4) (Geobacter uraniireducens)).